A 98-amino-acid chain; its full sequence is Small ribosomal subunit protein uS19 (98 aa).

Disordered regions lie at residues 1–30 (MARS…KKSV) and 78–98 (RTFH…PAKK). Over residues 9-24 (PFADKHLTKKVEDANK) the composition is skewed to basic and acidic residues.

This sequence belongs to the universal ribosomal protein uS19 family.

Protein S19 forms a complex with S13 that binds strongly to the 16S ribosomal RNA. The protein is Small ribosomal subunit protein uS19 of Anaeromyxobacter dehalogenans (strain 2CP-1 / ATCC BAA-258).